Here is a 310-residue protein sequence, read N- to C-terminus: Putative S-adenosyl-L-methionine-dependent methyltransferase MUL_4762 (310 aa).

S-adenosyl-L-methionine is bound by residues aspartate 132 and 161–162; that span reads DL.

The protein belongs to the UPF0677 family.

Its function is as follows. Exhibits S-adenosyl-L-methionine-dependent methyltransferase activity. The chain is Putative S-adenosyl-L-methionine-dependent methyltransferase MUL_4762 from Mycobacterium ulcerans (strain Agy99).